The following is a 444-amino-acid chain: N-succinylarginine dihydrolase (444 aa).

Substrate contacts are provided by residues 19–28 (SGLSFGNVAS), Asn-110, and 137–138 (HR). Glu-174 is an active-site residue. Residue Arg-214 participates in substrate binding. His-250 is an active-site residue. Substrate is bound by residues Asp-252 and Asn-362. Cys-368 acts as the Nucleophile in catalysis.

The protein belongs to the succinylarginine dihydrolase family. In terms of assembly, homodimer.

The enzyme catalyses N(2)-succinyl-L-arginine + 2 H2O + 2 H(+) = N(2)-succinyl-L-ornithine + 2 NH4(+) + CO2. It functions in the pathway amino-acid degradation; L-arginine degradation via AST pathway; L-glutamate and succinate from L-arginine: step 2/5. Functionally, catalyzes the hydrolysis of N(2)-succinylarginine into N(2)-succinylornithine, ammonia and CO(2). The polypeptide is N-succinylarginine dihydrolase (Photobacterium profundum (strain SS9)).